The sequence spans 704 residues: ATP-dependent zinc metalloprotease FTSH 5, chloroplastic (704 aa).

A chloroplast-targeting transit peptide spans 1-58 (MATTSSNPLLLSSNFLGSQIIISAPTPKTTTKSLPFSVISRKRYQISQSEKLMKSLPS). A thylakoid-targeting transit peptide spans 59-76 (QAALAALLFSSSSPQALA). A helical transmembrane segment spans residues 193-213 (FDFIGNLLFPLLAFGGLFYLF). 290–297 (GPPGTGKT) lines the ATP pocket. Histidine 512 serves as a coordination point for Zn(2+). Glutamate 513 is an active-site residue. 2 residues coordinate Zn(2+): histidine 516 and aspartate 593.

This sequence in the N-terminal section; belongs to the AAA ATPase family. It in the C-terminal section; belongs to the peptidase M41 family. In terms of assembly, heterohexamers with FTSH1, FTSH2 and FTSH8. It depends on Zn(2+) as a cofactor. As to expression, ubiquitous.

Its subcellular location is the plastid. The protein resides in the chloroplast thylakoid membrane. Its function is as follows. Part of a complex that function as an ATP-dependent zinc metallopeptidase. Involved in the thylakoid formation and in the removal of damaged D1 in the photosystem II, preventing cell death under high-intensity light conditions. Not involved in the degradation of the light-harvesting complex of photosystem II (LHC II) or in thermotolerance. The protein is ATP-dependent zinc metalloprotease FTSH 5, chloroplastic (FTSH5) of Arabidopsis thaliana (Mouse-ear cress).